The primary structure comprises 248 residues: Ribosomal RNA small subunit methyltransferase J (248 aa).

Residues 98–99 (RD), 114–115 (ER), 150–151 (SS), and aspartate 168 each bind S-adenosyl-L-methionine.

The protein belongs to the methyltransferase superfamily. RsmJ family.

The protein resides in the cytoplasm. The catalysed reaction is guanosine(1516) in 16S rRNA + S-adenosyl-L-methionine = N(2)-methylguanosine(1516) in 16S rRNA + S-adenosyl-L-homocysteine + H(+). Its function is as follows. Specifically methylates the guanosine in position 1516 of 16S rRNA. The protein is Ribosomal RNA small subunit methyltransferase J of Shewanella amazonensis (strain ATCC BAA-1098 / SB2B).